Reading from the N-terminus, the 187-residue chain is NADH-quinone oxidoreductase subunit B (187 aa).

Residues Cys-55, Cys-56, Cys-121, and Cys-150 each coordinate [4Fe-4S] cluster.

This sequence belongs to the complex I 20 kDa subunit family. NDH-1 is composed of 14 different subunits. Subunits NuoB, C, D, E, F, and G constitute the peripheral sector of the complex. [4Fe-4S] cluster is required as a cofactor.

The protein localises to the cell inner membrane. It catalyses the reaction a quinone + NADH + 5 H(+)(in) = a quinol + NAD(+) + 4 H(+)(out). In terms of biological role, NDH-1 shuttles electrons from NADH, via FMN and iron-sulfur (Fe-S) centers, to quinones in the respiratory chain. The immediate electron acceptor for the enzyme in this species is believed to be ubiquinone. Couples the redox reaction to proton translocation (for every two electrons transferred, four hydrogen ions are translocated across the cytoplasmic membrane), and thus conserves the redox energy in a proton gradient. The chain is NADH-quinone oxidoreductase subunit B from Bdellovibrio bacteriovorus (strain ATCC 15356 / DSM 50701 / NCIMB 9529 / HD100).